The chain runs to 221 residues: Chalcone--flavanone isomerase (221 aa).

Substrate contacts are provided by Thr50, Asn115, and Thr192.

It belongs to the chalcone isomerase family.

The catalysed reaction is a chalcone = a flavanone.. It participates in secondary metabolite biosynthesis; flavonoid biosynthesis. Functionally, catalyzes the intramolecular cyclization of bicyclic chalcones into tricyclic (S)-flavanones. Responsible for the isomerization of 4,2',4',6'-tetrahydroxychalcone (also termed chalcone) into naringenin. This is Chalcone--flavanone isomerase (CHI) from Phaseolus vulgaris (Kidney bean).